A 146-amino-acid chain; its full sequence is Transcription antitermination protein NusB (146 aa).

The protein belongs to the NusB family.

Involved in transcription antitermination. Required for transcription of ribosomal RNA (rRNA) genes. Binds specifically to the boxA antiterminator sequence of the ribosomal RNA (rrn) operons. The polypeptide is Transcription antitermination protein NusB (Solibacter usitatus (strain Ellin6076)).